The chain runs to 1503 residues: Protein Skeletor, isoforms D/E (1503 aa).

An N-terminal signal peptide occupies residues 1–28 (MLAMKDKPWLLLFGLLAALSCLASFGDA). 2 consecutive DM13 domains span residues 34-143 (GTKI…VSIP) and 151-258 (PQKI…VRLP). Residues 287-419 (LAFEVRWAVA…GAESVVWAIG (133 aa)) form the DOMON domain. Disordered stretches follow at residues 451–491 (PLPE…NVEP), 830–857 (NPNL…PTEI), 1086–1106 (IFNQ…SSVS), and 1426–1503 (EFRG…GRRA). Over residues 830-840 (NPNLNPNHPNQ) the composition is skewed to low complexity. A compositionally biased stretch (low complexity) spans 1452–1491 (SSSSGSTIYPYSSSTGASTSTVSSSASSPLSSSSLRPIST).

Interacts with Chro and Mgtor as part of a macromolecular complex forming the spindle matrix. Chro colocalizes with Skeletor (Skel) on the chromosomes at interphase and on spindle during metaphase.

The protein localises to the cytoplasm. The protein resides in the cytoskeleton. Its subcellular location is the spindle. It is found in the nucleus. It localises to the nucleolus. The protein localises to the chromosome. Provides structural support to stabilize and organize the microtubule spindle during mitosis (within embryonic somatic cells) and meiosis (within spermatocytes). The role in mitosis regulation depends on the Ran pathway. The sequence is that of Protein Skeletor, isoforms D/E from Drosophila melanogaster (Fruit fly).